Reading from the N-terminus, the 61-residue chain is Rubredoxin 3 (61 aa).

Positions Met1–Met53 constitute a Rubredoxin-like domain. Positions 6, 9, 39, and 42 each coordinate Fe cation.

Belongs to the rubredoxin family. Fe(3+) serves as cofactor.

Its function is as follows. Involved in the hydrocarbon hydroxylating system, which transfers electrons from NADH to rubredoxin reductase and then through rubredoxin to alkane 1 monooxygenase. This is Rubredoxin 3 (rubA3) from Rhodococcus erythropolis (Arthrobacter picolinophilus).